The sequence spans 463 residues: MAKNTKLWGGRFEGTVEDWVERFGASISFDQKLAKFDVIGSLAHVQMLGQTGILSLEESEKIQVGLKELLEELEAGQLDFDIANEDIHMNMEVLLTEKIGPLAGKLHTARSRNDQVATDMHLYLKEQLGYVLDKLAHLKGVLLDLAENHVATIMPGYTHLQHAQPISFAHHLMAYYNMFQRDSERFEFNQKHTDLCPLGAAALAGTTFPIDRQLSSDLLEFKQPYTNSLDAVSDRDFILEFLSNASILMMHMSRFCEEMINWCSFEYQFITLSDTFTIGSSIMPQKKNPDMAELIRGKTGRVYGHLFGLLTVMKSLPLAYNKDLQEDKEGMFDTVETILNSLDVLAGMLSSLQVNKEKMQESTEKDFSNATELADYLAGKGLPFREAHEVVGRLVLDSIKSAKNLQDWTLEELQTYHSLITEDIYVYLQPKTAVQRRNSLGGTGFDQVEYQIAVAKKANEAKK.

Belongs to the lyase 1 family. Argininosuccinate lyase subfamily.

It is found in the cytoplasm. It catalyses the reaction 2-(N(omega)-L-arginino)succinate = fumarate + L-arginine. It functions in the pathway amino-acid biosynthesis; L-arginine biosynthesis; L-arginine from L-ornithine and carbamoyl phosphate: step 3/3. The protein is Argininosuccinate lyase of Streptococcus pneumoniae (strain 70585).